A 235-amino-acid chain; its full sequence is Ubiquinone/menaquinone biosynthesis C-methyltransferase UbiE (235 aa).

The S-adenosyl-L-methionine site is built by threonine 60 and aspartate 81.

Belongs to the class I-like SAM-binding methyltransferase superfamily. MenG/UbiE family.

It catalyses the reaction a 2-demethylmenaquinol + S-adenosyl-L-methionine = a menaquinol + S-adenosyl-L-homocysteine + H(+). The enzyme catalyses a 2-methoxy-6-(all-trans-polyprenyl)benzene-1,4-diol + S-adenosyl-L-methionine = a 5-methoxy-2-methyl-3-(all-trans-polyprenyl)benzene-1,4-diol + S-adenosyl-L-homocysteine + H(+). It functions in the pathway quinol/quinone metabolism; menaquinone biosynthesis; menaquinol from 1,4-dihydroxy-2-naphthoate: step 2/2. The protein operates within cofactor biosynthesis; ubiquinone biosynthesis. Functionally, methyltransferase required for the conversion of demethylmenaquinol (DMKH2) to menaquinol (MKH2) and the conversion of 2-polyprenyl-6-methoxy-1,4-benzoquinol (DDMQH2) to 2-polyprenyl-3-methyl-6-methoxy-1,4-benzoquinol (DMQH2). The protein is Ubiquinone/menaquinone biosynthesis C-methyltransferase UbiE of Geotalea uraniireducens (strain Rf4) (Geobacter uraniireducens).